A 356-amino-acid polypeptide reads, in one-letter code: Chorismate synthase (356 aa).

Residues Arg-44 and Arg-49 each coordinate NADP(+). Residues His-121–Ser-123, Gly-278, Lys-293–Ser-297, and Arg-320 contribute to the FMN site.

It belongs to the chorismate synthase family. The cofactor is FMNH2.

It catalyses the reaction 5-O-(1-carboxyvinyl)-3-phosphoshikimate = chorismate + phosphate. The protein operates within metabolic intermediate biosynthesis; chorismate biosynthesis; chorismate from D-erythrose 4-phosphate and phosphoenolpyruvate: step 7/7. Catalyzes the anti-1,4-elimination of the C-3 phosphate and the C-6 proR hydrogen from 5-enolpyruvylshikimate-3-phosphate (EPSP) to yield chorismate, which is the branch point compound that serves as the starting substrate for the three terminal pathways of aromatic amino acid biosynthesis. This reaction introduces a second double bond into the aromatic ring system. In Thermococcus gammatolerans (strain DSM 15229 / JCM 11827 / EJ3), this protein is Chorismate synthase.